The sequence spans 496 residues: Glycerol kinase (496 aa).

ADP is bound at residue T12. T12, T13, and S14 together coordinate ATP. A sn-glycerol 3-phosphate-binding site is contributed by T12. ADP is bound at residue R16. 4 residues coordinate sn-glycerol 3-phosphate: R82, E83, Y134, and D244. Glycerol contacts are provided by R82, E83, Y134, D244, and Q245. ADP-binding residues include T266 and G309. ATP-binding residues include T266, G309, Q313, and G410. 2 residues coordinate ADP: G410 and N414.

Belongs to the FGGY kinase family.

The catalysed reaction is glycerol + ATP = sn-glycerol 3-phosphate + ADP + H(+). The protein operates within polyol metabolism; glycerol degradation via glycerol kinase pathway; sn-glycerol 3-phosphate from glycerol: step 1/1. With respect to regulation, inhibited by fructose 1,6-bisphosphate (FBP). Functionally, key enzyme in the regulation of glycerol uptake and metabolism. Catalyzes the phosphorylation of glycerol to yield sn-glycerol 3-phosphate. This Treponema denticola (strain ATCC 35405 / DSM 14222 / CIP 103919 / JCM 8153 / KCTC 15104) protein is Glycerol kinase.